The following is a 276-amino-acid chain: Dermonecrotic toxin LlSicTox-alphaIV2iv (276 aa).

His-5 is an active-site residue. 2 residues coordinate Mg(2+): Glu-25 and Asp-27. The active-site Nucleophile is the His-41. 2 disulfides stabilise this stretch: Cys-45–Cys-51 and Cys-47–Cys-193. Asp-85 serves as a coordination point for Mg(2+).

Belongs to the arthropod phospholipase D family. Class II subfamily. Mg(2+) is required as a cofactor. In terms of tissue distribution, expressed by the venom gland.

It is found in the secreted. The catalysed reaction is an N-(acyl)-sphingosylphosphocholine = an N-(acyl)-sphingosyl-1,3-cyclic phosphate + choline. The enzyme catalyses an N-(acyl)-sphingosylphosphoethanolamine = an N-(acyl)-sphingosyl-1,3-cyclic phosphate + ethanolamine. It catalyses the reaction a 1-acyl-sn-glycero-3-phosphocholine = a 1-acyl-sn-glycero-2,3-cyclic phosphate + choline. It carries out the reaction a 1-acyl-sn-glycero-3-phosphoethanolamine = a 1-acyl-sn-glycero-2,3-cyclic phosphate + ethanolamine. Dermonecrotic toxins cleave the phosphodiester linkage between the phosphate and headgroup of certain phospholipids (sphingolipid and lysolipid substrates), forming an alcohol (often choline) and a cyclic phosphate. This toxin acts on sphingomyelin (SM). It may also act on ceramide phosphoethanolamine (CPE), lysophosphatidylcholine (LPC) and lysophosphatidylethanolamine (LPE), but not on lysophosphatidylserine (LPS), and lysophosphatidylglycerol (LPG). It acts by transphosphatidylation, releasing exclusively cyclic phosphate products as second products. Induces dermonecrosis, hemolysis, increased vascular permeability, edema, inflammatory response, and platelet aggregation. The protein is Dermonecrotic toxin LlSicTox-alphaIV2iv of Loxosceles laeta (South American recluse spider).